We begin with the raw amino-acid sequence, 710 residues long: Solute carrier family 15 member 1 (710 aa).

Residues 1–21 (MGMSKSRGCFGYPLSIFFIVV) traverse the membrane as a helical segment. The Extracellular portion of the chain corresponds to 22 to 53 (NEFCERFSYYGMRALLVLYFRNFLGWDDDLST). The helical transmembrane segment at 54–74 (AIYHTFVALCYLTPILGALIA) threads the bilayer. The Cytoplasmic portion of the chain corresponds to 75-82 (DSWLGKFK). The chain crosses the membrane as a helical span at residues 83–103 (TIVSLSIVYTIGQAVISVSSI). The Extracellular portion of the chain corresponds to 104 to 118 (NDLTDHDHDGSPNNL). Residues 119 to 139 (PLHVALSMIGLALIALGTGGI) traverse the membrane as a helical segment. Over 140 to 161 (KPCVSAFGGDQFEEGQEKQRNR) the chain is Cytoplasmic. The helical transmembrane segment at 162 to 182 (FFSIFYLAINAGSLLSTIITP) threads the bilayer. Residues 183–198 (ILRVQQCGIHSQQACY) lie on the Extracellular side of the membrane. A helical membrane pass occupies residues 199 to 219 (PLAFGVPAALMAVALIVFVLG). The Cytoplasmic portion of the chain corresponds to 220 to 276 (SGMYKKFQPQGNIMGKVAKCIRFAIKNRFRHRSKAFPKRNHWLDWAKEKYDERLISQ). A helical membrane pass occupies residues 277 to 297 (IKIMTKVMFLYIPLPMFWALF). Topologically, residues 298–327 (DQQGSRWTLQATTMTGKIGTIEIQPDQMQT) are extracellular. Residues 328-348 (VNAILIVIMVPIVDAVVYPLI) traverse the membrane as a helical segment. Residues 349 to 361 (AKCGFNFTSLKKM) are Cytoplasmic-facing. A helical transmembrane segment spans residues 362–382 (TVGMFLASMAFVVAAIVQVEI). Residues 383-586 (DKTLPVFPSG…PPNTVNMALQ (204 aa)) lie on the Extracellular side of the membrane. Residues 383–586 (DKTLPVFPSG…PPNTVNMALQ (204 aa)) form an extracellular domain (ECD) region. N-linked (GlcNAc...) asparagine glycosylation is found at N415, N439, N510, N532, and N539. Residues 587 to 607 (IPQYFLLTCGEVVFSVTGLEF) traverse the membrane as a helical segment. Residues 608–621 (SYSQAPSNMKSVLQ) lie on the Cytoplasmic side of the membrane. Residues 622-642 (AGWLLTVAIGNIIVLIVAEAG) form a helical membrane-spanning segment. Residues 643-647 (HFDKQ) are Extracellular-facing. Residues 648-668 (WAEYVLFASLLLVVCIIFAIM) form a helical membrane-spanning segment. Topologically, residues 669–710 (ARFYTYINPAEIEAQFDEDEKKKGVGKENPYSSLEPVSQTNM) are cytoplasmic. The segment at 687 to 710 (DEKKKGVGKENPYSSLEPVSQTNM) is disordered. The segment covering 698-710 (PYSSLEPVSQTNM) has biased composition (polar residues).

This sequence belongs to the major facilitator superfamily. Proton-dependent oligopeptide transporter (POT/PTR) (TC 2.A.17) family. In terms of assembly, interacts (via extracellular domain region) with trypsin. Highly expressed in small intestine. In terms of tissue distribution, expression is restricted to pinealocytes.

The protein resides in the apical cell membrane. It carries out the reaction a dipeptide(out) + H(+)(out) = a dipeptide(in) + H(+)(in). The enzyme catalyses an L-amino acid tripeptide(out) + H(+)(out) = an L-amino acid tripeptide(in) + H(+)(in). It catalyses the reaction L-alanyl-L-lysine(out) + H(+)(out) = L-alanyl-L-lysine(in) + H(+)(in). The catalysed reaction is L-alanyl-L-proline(out) + H(+)(out) = L-alanyl-L-proline(in) + H(+)(in). It carries out the reaction L-alanyl-L-valine(out) + H(+)(out) = L-alanyl-L-valine(in) + H(+)(in). The enzyme catalyses carnosine(out) + H(+)(out) = carnosine(in) + H(+)(in). It catalyses the reaction glycyl-L-glutamine(out) + H(+)(out) = glycyl-L-glutamine(in) + H(+)(in). The catalysed reaction is glycyl-L-leucine(out) + H(+)(out) = glycyl-L-leucine(in) + H(+)(in). It carries out the reaction glycyl-L-proline(out) + H(+)(out) = glycyl-L-proline(in) + H(+)(in). The enzyme catalyses glycyl-sarcosine(out) + H(+)(out) = glycyl-sarcosine(in) + H(+)(in). It catalyses the reaction L-leucyl-L-leucine(out) + H(+)(out) = L-leucyl-L-leucine(in) + H(+)(in). The catalysed reaction is L-leucyl-L-proline(out) + H(+)(out) = L-leucyl-L-proline(in) + H(+)(in). It carries out the reaction L-phenylalanyl-L-leucine(out) + H(+)(out) = L-phenylalanyl-L-leucine(in) + H(+)(in). The enzyme catalyses L-phenylalanyl-L-phenylalanine(out) + H(+)(out) = L-phenylalanyl-L-phenylalanine(in) + H(+)(in). It catalyses the reaction L-lysyl-glycine(out) + H(+)(out) = L-lysyl-glycine(in) + H(+)(in). The catalysed reaction is L-tyrosylglycine(out) + H(+)(out) = L-tyrosylglycine(in) + H(+)(in). It carries out the reaction L-alanyl-L-aspartate(out) + 2 H(+)(out) = L-alanyl-L-aspartate(in) + 2 H(+)(in). The enzyme catalyses L-aspartyl-glycine(out) + 2 H(+)(out) = L-aspartyl-glycine(in) + 2 H(+)(in). It catalyses the reaction glycyl-L-aspartate(out) + 2 H(+)(out) = glycyl-L-aspartate(in) + 2 H(+)(in). The catalysed reaction is glycyl-L-glutamate(out) + 2 H(+)(out) = glycyl-L-glutamate(in) + 2 H(+)(in). It carries out the reaction L-alanyl-L-leucyl-L-alanine(out) + H(+)(out) = L-alanyl-L-leucyl-L-alanine(in) + H(+)(in). The enzyme catalyses L-alanyl-L-prolylglycine(out) + H(+)(out) = L-alanyl-L-prolylglycine(in) + H(+)(in). It catalyses the reaction glycylglycyl-L-isoleucine(out) + H(+)(out) = glycylglycyl-L-isoleucine(in) + H(+)(in). The catalysed reaction is glycylglycyl-L-proline(out) + H(+)(out) = glycylglycyl-L-proline(in) + H(+)(in). It carries out the reaction L-methionyl-L-phenylalanyl-L-methionine(out) + H(+)(out) = L-methionyl-L-phenylalanyl-L-methionine(in) + H(+)(in). The enzyme catalyses N-acetyl-D-muramoyl-L-alanyl-D-isoglutamine(out) + 2 H(+)(out) = N-acetyl-D-muramoyl-L-alanyl-D-isoglutamine(in) + 2 H(+)(in). It catalyses the reaction N(alpha)-formyl-L-methionyl-L-leucyl-L-phenylalanine(out) + 2 H(+)(out) = N(alpha)-formyl-L-methionyl-L-leucyl-L-phenylalanine(in) + 2 H(+)(in). Functionally, electrogenic proton-coupled amino-acid transporter that transports oligopeptides of 2 to 4 amino acids with a preference for dipeptides. Transports neutral and monovalently charged peptides with a proton to peptide stoichiometry of 1:1 or 2:1. Primarily responsible for the absorption of dietary di- and tripeptides from the small intestinal lumen. Mediates transepithelial transport of muramyl and N-formylated bacterial dipeptides contributing to recognition of pathogenic bacteria by the mucosal immune system. The polypeptide is Solute carrier family 15 member 1 (Slc15a1) (Rattus norvegicus (Rat)).